The primary structure comprises 125 residues: E4-ORF1 (125 aa).

The short motif at 122-125 is the PDZ-binding element; that stretch reads ATLV.

It belongs to the dUTPase family. As to quaternary structure, binds to human MPDZ.

The protein localises to the host cytoplasm. The enzyme catalyses dUTP + H2O = dUMP + diphosphate + H(+). Functionally, plays a key role in virus oncogenecity in animals. Binds and sequesters human MUPP1/MPDZ protein in the cytoplasm, preventing it from playing a role in cellular proliferation regulation. Induces cell transformation, probably by inactivating MPDZ protein. In Homo sapiens (Human), this protein is E4-ORF1 (E4).